We begin with the raw amino-acid sequence, 214 residues long: Thiopurine S-methyltransferase (214 aa).

The S-adenosyl-L-methionine site is built by W10, L44, E65, and R122.

The protein belongs to the class I-like SAM-binding methyltransferase superfamily. TPMT family.

The protein localises to the cytoplasm. The enzyme catalyses S-adenosyl-L-methionine + a thiopurine = S-adenosyl-L-homocysteine + a thiopurine S-methylether.. This is Thiopurine S-methyltransferase from Teredinibacter turnerae (strain ATCC 39867 / T7901).